Reading from the N-terminus, the 331-residue chain is Probable protein phosphatase 2C 72 (331 aa).

Residues 43-324 (LGSVCSIQGT…DDITVICLFL (282 aa)) form the PPM-type phosphatase domain. Mn(2+) is bound by residues Asp78, Gly79, Asp268, and Asp315.

Belongs to the PP2C family. The cofactor is Mg(2+). It depends on Mn(2+) as a cofactor.

It catalyses the reaction O-phospho-L-seryl-[protein] + H2O = L-seryl-[protein] + phosphate. The catalysed reaction is O-phospho-L-threonyl-[protein] + H2O = L-threonyl-[protein] + phosphate. This Arabidopsis thaliana (Mouse-ear cress) protein is Probable protein phosphatase 2C 72.